A 143-amino-acid polypeptide reads, in one-letter code: Large ribosomal subunit protein uL13 (143 aa).

Belongs to the universal ribosomal protein uL13 family. Part of the 50S ribosomal subunit.

Its function is as follows. This protein is one of the early assembly proteins of the 50S ribosomal subunit, although it is not seen to bind rRNA by itself. It is important during the early stages of 50S assembly. This is Large ribosomal subunit protein uL13 from Coprothermobacter proteolyticus (strain ATCC 35245 / DSM 5265 / OCM 4 / BT).